The following is a 348-amino-acid chain: UDP-3-O-acylglucosamine N-acyltransferase (348 aa).

The Proton acceptor role is filled by His-257.

Belongs to the transferase hexapeptide repeat family. LpxD subfamily. Homotrimer.

It catalyses the reaction a UDP-3-O-[(3R)-3-hydroxyacyl]-alpha-D-glucosamine + a (3R)-hydroxyacyl-[ACP] = a UDP-2-N,3-O-bis[(3R)-3-hydroxyacyl]-alpha-D-glucosamine + holo-[ACP] + H(+). Its pathway is bacterial outer membrane biogenesis; LPS lipid A biosynthesis. In terms of biological role, catalyzes the N-acylation of UDP-3-O-acylglucosamine using 3-hydroxyacyl-ACP as the acyl donor. Is involved in the biosynthesis of lipid A, a phosphorylated glycolipid that anchors the lipopolysaccharide to the outer membrane of the cell. This Bartonella henselae (strain ATCC 49882 / DSM 28221 / CCUG 30454 / Houston 1) (Rochalimaea henselae) protein is UDP-3-O-acylglucosamine N-acyltransferase.